We begin with the raw amino-acid sequence, 81 residues long: Exodeoxyribonuclease 7 small subunit (81 aa).

Belongs to the XseB family. Heterooligomer composed of large and small subunits.

It is found in the cytoplasm. The enzyme catalyses Exonucleolytic cleavage in either 5'- to 3'- or 3'- to 5'-direction to yield nucleoside 5'-phosphates.. Its function is as follows. Bidirectionally degrades single-stranded DNA into large acid-insoluble oligonucleotides, which are then degraded further into small acid-soluble oligonucleotides. The chain is Exodeoxyribonuclease 7 small subunit from Paramagnetospirillum magneticum (strain ATCC 700264 / AMB-1) (Magnetospirillum magneticum).